The sequence spans 494 residues: Casein kinase I homolog HRR25 (494 aa).

The region spanning 9 to 278 (FRIGRKIGSG…LARLFKDLSI (270 aa)) is the Protein kinase domain. ATP is bound by residues 15–23 (IGSGSFGDI) and K38. Catalysis depends on D128, which acts as the Proton acceptor. At S143 the chain carries Phosphoserine. A disordered region spans residues 394 to 494 (RQQQPQQQVQ…DKPAGQSIWL (101 aa)). Composition is skewed to low complexity over residues 395-418 (QQQPQQQVQSSQPQPQPQQLQQQP) and 432-444 (QQQQRDSQEQQQQ). Residues 445 to 479 (VPMATTRATQYPPQINSNNFNTNQASVPPQMRSNP) are compositionally biased toward polar residues.

The protein belongs to the protein kinase superfamily. CK1 Ser/Thr protein kinase family. Casein kinase I subfamily. Interacts with HRI1. Interacts with ELP1/IKI3; the interaction leads to ELP1/IKI3 phosphorylation.

It is found in the cytoplasm. The protein resides in the nucleus. The protein localises to the nucleolus. It localises to the nucleoplasm. The enzyme catalyses L-seryl-[protein] + ATP = O-phospho-L-seryl-[protein] + ADP + H(+). It carries out the reaction L-threonyl-[protein] + ATP = O-phospho-L-threonyl-[protein] + ADP + H(+). Functionally, protein kinase which phosphorylates serine and threonine residues. Can use casein as a substrate. Phosphorylates elongator complex member ELP1/IKI3 on 'Ser-1198' and 'Ser-1202' which promotes the tRNA modification function of the complex. Associated with repair of damaged DNA and meiosis. The protein is Casein kinase I homolog HRR25 (HRR25) of Saccharomyces cerevisiae (strain ATCC 204508 / S288c) (Baker's yeast).